Consider the following 182-residue polypeptide: pEARLI1-like lipid transfer protein 2 (182 aa).

Positions 1–25 are cleaved as a signal peptide; the sequence is MASKNSASLALFFALNILFFTLTAG. Residues 33-92 show a composition bias toward pro residues; that stretch reads SPKPRPLPNPKVPSPKVPTPSVPSPYVPTPSVPSPSVPTPSVPSPSVPSPNPTPVIPPRT. The interval 33-94 is disordered; that stretch reads SPKPRPLPNP…TPVIPPRTPG (62 aa). A run of 7 repeats spans residues 42–46, 47–51, 52–56, 62–66, 67–71, 72–76, and 77–81. The 7 X 5 AA repeats of P-[KS]-V-P-[ST] stretch occupies residues 42-81; sequence PKVPSPKVPTPSVPSPYVPTPSVPSPSVPTPSVPSPSVPS.

It belongs to the plant LTP family. PEARLI1 subfamily.

Its subcellular location is the secreted. The protein localises to the cell wall. Probable lipid transfer protein (LTP). May improve freezing survival. Seems to control the flowering process and lignin synthesis. Confers resistance to Botrytis cinerea. This Arabidopsis thaliana (Mouse-ear cress) protein is pEARLI1-like lipid transfer protein 2.